The following is a 227-amino-acid chain: ATP synthase F(0) complex subunit a (227 aa).

Transmembrane regions (helical) follow at residues Phe14–Pro34, Trp69–Leu89, Gln98–Met118, Ile139–Val159, Leu165–Ile185, and Ile189–Met209.

This sequence belongs to the ATPase A chain family. As to quaternary structure, component of the ATP synthase complex composed at least of ATP5F1A/subunit alpha, ATP5F1B/subunit beta, ATP5MC1/subunit c (homooctomer), MT-ATP6/subunit a, MT-ATP8/subunit 8, ATP5ME/subunit e, ATP5MF/subunit f, ATP5MG/subunit g, ATP5MK/subunit k, ATP5MJ/subunit j, ATP5F1C/subunit gamma, ATP5F1D/subunit delta, ATP5F1E/subunit epsilon, ATP5PF/subunit F6, ATP5PB/subunit b, ATP5PD/subunit d, ATP5PO/subunit OSCP. ATP synthase complex consists of a soluble F(1) head domain (subunits alpha(3) and beta(3)) - the catalytic core - and a membrane F(0) domain - the membrane proton channel (subunits c, a, 8, e, f, g, k and j). These two domains are linked by a central stalk (subunits gamma, delta, and epsilon) rotating inside the F1 region and a stationary peripheral stalk (subunits F6, b, d, and OSCP). Interacts with DNAJC30; interaction is direct.

It is found in the mitochondrion inner membrane. The catalysed reaction is H(+)(in) = H(+)(out). Subunit a, of the mitochondrial membrane ATP synthase complex (F(1)F(0) ATP synthase or Complex V) that produces ATP from ADP in the presence of a proton gradient across the membrane which is generated by electron transport complexes of the respiratory chain. ATP synthase complex consist of a soluble F(1) head domain - the catalytic core - and a membrane F(1) domain - the membrane proton channel. These two domains are linked by a central stalk rotating inside the F(1) region and a stationary peripheral stalk. During catalysis, ATP synthesis in the catalytic domain of F(1) is coupled via a rotary mechanism of the central stalk subunits to proton translocation. With the subunit c (ATP5MC1), forms the proton-conducting channel in the F(0) domain, that contains two crucial half-channels (inlet and outlet) that facilitate proton movement from the mitochondrial intermembrane space (IMS) into the matrix. Protons are taken up via the inlet half-channel and released through the outlet half-channel, following a Grotthuss mechanism. This chain is ATP synthase F(0) complex subunit a, found in Polypterus ornatipinnis (Ornate bichir).